The primary structure comprises 367 residues: Quinolinate synthase (367 aa).

Iminosuccinate-binding residues include His-45 and Ser-62. Cys-109 serves as a coordination point for [4Fe-4S] cluster. Iminosuccinate contacts are provided by residues 140 to 142 (YVN) and Ser-161. [4Fe-4S] cluster is bound at residue Cys-229. Iminosuccinate-binding positions include 255-257 (HPE) and Thr-272. Cys-319 lines the [4Fe-4S] cluster pocket.

It belongs to the quinolinate synthase family. Type 3 subfamily. Requires [4Fe-4S] cluster as cofactor.

It localises to the cytoplasm. The catalysed reaction is iminosuccinate + dihydroxyacetone phosphate = quinolinate + phosphate + 2 H2O + H(+). The protein operates within cofactor biosynthesis; NAD(+) biosynthesis; quinolinate from iminoaspartate: step 1/1. Catalyzes the condensation of iminoaspartate with dihydroxyacetone phosphate to form quinolinate. The chain is Quinolinate synthase from Lysinibacillus sphaericus (strain C3-41).